A 304-amino-acid polypeptide reads, in one-letter code: MLDVCLLGTSGMLPLPGRWLTSLMTRYNGSSLMIDCGEGTQIAVKQKGWSFNPIDVICFTHYHADHISGLPGLLLTIGNSDRKKPLTLVGPKGLGRVVSSLRVIAPELPFELKFIELTNQQEHLSICGYEIDAFRVNHAVICYGYSISIPRIGKFDVEKAKELGIPCSMWNKLQHGTAVTIDDKEYTPDMVMGAARKGLKVTYCTDSRPVQIISDNAKESDLFICEGMYGEDGKEAKAKEYKHMTFTEAAQLAKNADVREMWLTHYSPSLVRPQDYVDKARKIFPATIAANDGRTVELKFDDEG.

Zn(2+) is bound by residues H61, H63, D65, H66, H138, D206, and H265. The Proton acceptor role is filled by D65.

It belongs to the RNase Z family. Homodimer. It depends on Zn(2+) as a cofactor.

The catalysed reaction is Endonucleolytic cleavage of RNA, removing extra 3' nucleotides from tRNA precursor, generating 3' termini of tRNAs. A 3'-hydroxy group is left at the tRNA terminus and a 5'-phosphoryl group is left at the trailer molecule.. In terms of biological role, zinc phosphodiesterase, which displays some tRNA 3'-processing endonuclease activity. Probably involved in tRNA maturation, by removing a 3'-trailer from precursor tRNA. In Lachnospira eligens (strain ATCC 27750 / DSM 3376 / VPI C15-48 / C15-B4) (Eubacterium eligens), this protein is Ribonuclease Z.